We begin with the raw amino-acid sequence, 326 residues long: Ribosomal large subunit pseudouridine synthase D (326 aa).

The active site involves Asp144.

Belongs to the pseudouridine synthase RluA family.

Its subcellular location is the cytoplasm. It carries out the reaction uridine(1911/1915/1917) in 23S rRNA = pseudouridine(1911/1915/1917) in 23S rRNA. In terms of biological role, responsible for synthesis of pseudouridine from uracil at positions 1911, 1915 and 1917 in 23S ribosomal RNA. This chain is Ribosomal large subunit pseudouridine synthase D, found in Borreliella burgdorferi (strain ATCC 35210 / DSM 4680 / CIP 102532 / B31) (Borrelia burgdorferi).